Reading from the N-terminus, the 279-residue chain is Acyl-[acyl-carrier-protein]--UDP-N-acetylglucosamine O-acyltransferase (279 aa).

The interval I256 to S279 is disordered.

The protein belongs to the transferase hexapeptide repeat family. LpxA subfamily. Homotrimer.

It is found in the cytoplasm. The catalysed reaction is a (3R)-hydroxyacyl-[ACP] + UDP-N-acetyl-alpha-D-glucosamine = a UDP-3-O-[(3R)-3-hydroxyacyl]-N-acetyl-alpha-D-glucosamine + holo-[ACP]. Its pathway is glycolipid biosynthesis; lipid IV(A) biosynthesis; lipid IV(A) from (3R)-3-hydroxytetradecanoyl-[acyl-carrier-protein] and UDP-N-acetyl-alpha-D-glucosamine: step 1/6. In terms of biological role, involved in the biosynthesis of lipid A, a phosphorylated glycolipid that anchors the lipopolysaccharide to the outer membrane of the cell. In Chlamydia caviae (strain ATCC VR-813 / DSM 19441 / 03DC25 / GPIC) (Chlamydophila caviae), this protein is Acyl-[acyl-carrier-protein]--UDP-N-acetylglucosamine O-acyltransferase.